We begin with the raw amino-acid sequence, 424 residues long: Lactate racemase (424 aa).

72–75 (DHTR) is a Ni(II)-pyridinium-3,5-bisthiocarboxylate mononucleotide binding site. Active-site proton donor/acceptor residues include His-108 and His-174. Ni(II)-pyridinium-3,5-bisthiocarboxylate mononucleotide contacts are provided by Lys-184 and His-200. Positions 295 and 298 each coordinate substrate.

This sequence belongs to the lactate racemase family. As to quaternary structure, homodimer. It depends on Ni(II)-pyridinium-3,5-bisthiocarboxylate mononucleotide as a cofactor.

It carries out the reaction (S)-lactate = (R)-lactate. Its activity is regulated as follows. Activation of the apo-enzyme requires the three accessory proteins LarB, LarE and LarC, that are involved in the biosynthesis of the nickel-pincer cofactor of LarA. Inhibited by sulfite that behaves as a mixed inhibitor. Functionally, catalyzes the interconversion between the D- and L-isomers of lactate. May act as a rescue enzyme to ensure D-lactate production in physiological conditions where its production by the D-lactate dehydrogenase LdhD is not sufficient. D-Lactate is absolutely required for growth of L.plantarum and is an essential component of the cell wall peptidoglycan in this species, where it is incorporated as the last residue of the muramoyl-pentadepsipeptide peptidoglycan precursor; its incorporation confers high level of vancomycin resistance. This chain is Lactate racemase, found in Lactiplantibacillus plantarum (strain ATCC BAA-793 / NCIMB 8826 / WCFS1) (Lactobacillus plantarum).